Reading from the N-terminus, the 562-residue chain is BOS complex subunit NCLN (562 aa).

An N-terminal signal peptide occupies residues 1-41 (MLEEAGEVLESVLKASCLPLSFLLFVPAVLLLLGPPPAAEA). Topologically, residues 42–521 (AHESTVYRMQ…VMNAYRVKPA (480 aa)) are extracellular. Residue Asn240 is glycosylated (N-linked (GlcNAc...) asparagine). The disordered stretch occupies residues 420–447 (GFDEGHLQPNREGSTCRSADLHGSDADP). The chain crosses the membrane as a helical span at residues 522–542 (IFDLLLAVCIAAYLGVAYVAV). At 543-562 (QNFGLLYRMIQRLSLKTKQQ) the chain is on the cytoplasmic side.

It belongs to the nicastrin family. As to quaternary structure, component of the multi-pass translocon (MPT) complex.

It localises to the endoplasmic reticulum membrane. Functionally, component of the multi-pass translocon (MPT) complex that mediates insertion of multi-pass membrane proteins into the lipid bilayer of membranes. The MPT complex takes over after the SEC61 complex: following membrane insertion of the first few transmembrane segments of proteins by the SEC61 complex, the MPT complex occludes the lateral gate of the SEC61 complex to promote insertion of subsequent transmembrane regions. May antagonize Nodal signaling and subsequent organization of axial structures during mesodermal patterning, via its interaction with NOMO. The polypeptide is BOS complex subunit NCLN (NCLN) (Gallus gallus (Chicken)).